Consider the following 249-residue polypeptide: 5'-nucleotidase SurE 2 (249 aa).

A divalent metal cation is bound by residues Asp8, Asp9, Ser40, and Asn90.

Belongs to the SurE nucleotidase family. It depends on a divalent metal cation as a cofactor.

The protein localises to the cytoplasm. The enzyme catalyses a ribonucleoside 5'-phosphate + H2O = a ribonucleoside + phosphate. Nucleotidase that shows phosphatase activity on nucleoside 5'-monophosphates. In Pyrobaculum aerophilum (strain ATCC 51768 / DSM 7523 / JCM 9630 / CIP 104966 / NBRC 100827 / IM2), this protein is 5'-nucleotidase SurE 2.